Here is a 92-residue protein sequence, read N- to C-terminus: Small ribosomal subunit protein uS19 (92 aa).

Belongs to the universal ribosomal protein uS19 family.

Functionally, protein S19 forms a complex with S13 that binds strongly to the 16S ribosomal RNA. The chain is Small ribosomal subunit protein uS19 from Roseobacter denitrificans (strain ATCC 33942 / OCh 114) (Erythrobacter sp. (strain OCh 114)).